The chain runs to 528 residues: GMP synthase [glutamine-hydrolyzing] (528 aa).

A Glutamine amidotransferase type-1 domain is found at 13–204; the sequence is AIVILDFGSQ…VYHICGCEPD (192 aa). Residue cysteine 90 is the Nucleophile of the active site. Catalysis depends on residues histidine 178 and glutamate 180. Residues 205-403 enclose the GMPS ATP-PPase domain; that stretch reads WTTTAFIEEA…LGLPEEIVRR (199 aa). 232–238 contacts ATP; it reads SGGVDSS.

As to quaternary structure, homodimer.

It catalyses the reaction XMP + L-glutamine + ATP + H2O = GMP + L-glutamate + AMP + diphosphate + 2 H(+). Its pathway is purine metabolism; GMP biosynthesis; GMP from XMP (L-Gln route): step 1/1. In terms of biological role, catalyzes the synthesis of GMP from XMP. The sequence is that of GMP synthase [glutamine-hydrolyzing] from Prochlorococcus marinus (strain MIT 9303).